A 426-amino-acid polypeptide reads, in one-letter code: tRNA(Ile)-lysidine synthase (426 aa).

21-26 is an ATP binding site; sequence SGGLDS.

The protein belongs to the tRNA(Ile)-lysidine synthase family.

It localises to the cytoplasm. It carries out the reaction cytidine(34) in tRNA(Ile2) + L-lysine + ATP = lysidine(34) in tRNA(Ile2) + AMP + diphosphate + H(+). Functionally, ligates lysine onto the cytidine present at position 34 of the AUA codon-specific tRNA(Ile) that contains the anticodon CAU, in an ATP-dependent manner. Cytidine is converted to lysidine, thus changing the amino acid specificity of the tRNA from methionine to isoleucine. The polypeptide is tRNA(Ile)-lysidine synthase (Enterobacter sp. (strain 638)).